A 389-amino-acid chain; its full sequence is Lipid-A-disaccharide synthase (389 aa).

It belongs to the LpxB family.

It catalyses the reaction a lipid X + a UDP-2-N,3-O-bis[(3R)-3-hydroxyacyl]-alpha-D-glucosamine = a lipid A disaccharide + UDP + H(+). Its pathway is bacterial outer membrane biogenesis; LPS lipid A biosynthesis. Functionally, condensation of UDP-2,3-diacylglucosamine and 2,3-diacylglucosamine-1-phosphate to form lipid A disaccharide, a precursor of lipid A, a phosphorylated glycolipid that anchors the lipopolysaccharide to the outer membrane of the cell. The polypeptide is Lipid-A-disaccharide synthase (Burkholderia ambifaria (strain ATCC BAA-244 / DSM 16087 / CCUG 44356 / LMG 19182 / AMMD) (Burkholderia cepacia (strain AMMD))).